We begin with the raw amino-acid sequence, 397 residues long: Lysophospholipid transporter LplT (397 aa).

Over 1–17 the chain is Periplasmic; the sequence is MSESVHTNTSLWSKGMK. A helical transmembrane segment spans residues 18–38; it reads AVIVAQFLSAFGDNALLFATL. At 39 to 52 the chain is on the cytoplasmic side; the sequence is ALLKAQFYPEWSQP. A helical membrane pass occupies residues 53 to 73; it reads ILQMVFVGAYILFAPFVGQVA. Residues 74-90 lie on the Periplasmic side of the membrane; it reads DSFAKGRVMMFANGLKL. Residues 91-111 traverse the membrane as a helical segment; the sequence is LGAASICFGINPFLGYTLVGV. Topologically, residues 112–144 are cytoplasmic; that stretch reads GAAAYSPAKYGILGELTTGSKLVKANGLMEAST. A helical membrane pass occupies residues 145 to 165; the sequence is IAAILLGSVAGGVLADWHVLV. Ala-166 is a topological domain (periplasmic). A helical membrane pass occupies residues 167 to 187; that stretch reads LAACALAYGGAVVANIYIPKL. Residues 188-226 are Cytoplasmic-facing; it reads AAARPGQSWNLINMTRSFLNACTSLWRNGETRFSLVGTS. A helical transmembrane segment spans residues 227–247; that stretch reads LFWGAGVTLRFLLVLWVPVAL. Topologically, residues 248 to 256 are periplasmic; that stretch reads GITDNATPT. A helical transmembrane segment spans residues 257–277; that stretch reads YLNAMVAIGIVVGAGAAAKLV. Over 278–280 the chain is Cytoplasmic; the sequence is TLE. The helical transmembrane segment at 281–301 threads the bilayer; it reads TVSRCMPAGILIGVVVLIFSL. Topologically, residues 302–304 are periplasmic; the sequence is QHE. Residues 305-325 form a helical membrane-spanning segment; the sequence is LLPAYALLMLIGVMGGFFVVP. At 326–343 the chain is on the cytoplasmic side; the sequence is LNALLQERGKKSVGAGNA. A helical membrane pass occupies residues 344–364; that stretch reads IAVQNLGENSAMLLMLGIYSL. Over 365-366 the chain is Periplasmic; the sequence is AV. The helical transmembrane segment at 367–387 threads the bilayer; the sequence is MVGIPVVPIGIGFGALFALAI. Residues 388-397 lie on the Cytoplasmic side of the membrane; the sequence is TALWIWQRRH.

This sequence belongs to the major facilitator superfamily. LplT (TC 2.A.1.42) family.

It localises to the cell inner membrane. Its function is as follows. Catalyzes the facilitated diffusion of 2-acyl-glycero-3-phosphoethanolamine (2-acyl-GPE) into the cell. This chain is Lysophospholipid transporter LplT, found in Escherichia coli (strain ATCC 8739 / DSM 1576 / NBRC 3972 / NCIMB 8545 / WDCM 00012 / Crooks).